Reading from the N-terminus, the 275-residue chain is Small ribosomal subunit protein uS2 (275 aa).

The interval Arg244–Glu275 is disordered. Positions Lys252–Ala261 are enriched in basic residues. Low complexity predominate over residues Pro262 to Glu275.

This sequence belongs to the universal ribosomal protein uS2 family.

This chain is Small ribosomal subunit protein uS2, found in Thioalkalivibrio sulfidiphilus (strain HL-EbGR7).